The following is a 186-amino-acid chain: Ribosome-recycling factor (186 aa).

The protein belongs to the RRF family.

The protein resides in the cytoplasm. Functionally, responsible for the release of ribosomes from messenger RNA at the termination of protein biosynthesis. May increase the efficiency of translation by recycling ribosomes from one round of translation to another. This is Ribosome-recycling factor from Nitratiruptor sp. (strain SB155-2).